The sequence spans 166 residues: MDLIRQLEAEQAQKIAAKRTLPDFSPGDTLRVQVRVTEGNRTRVQAFEGVCIARSGSGLQENFTVRKISYGEGVERVFPVYSPLVEAVEVVRRGKVRRAKLYYLRDRRGKSARISENTGARARKLNDAEREAAAQERARIEAEKVAAAEALAAEKAAAEAAEAKSE.

This sequence belongs to the bacterial ribosomal protein bL19 family.

Its function is as follows. This protein is located at the 30S-50S ribosomal subunit interface and may play a role in the structure and function of the aminoacyl-tRNA binding site. The protein is Large ribosomal subunit protein bL19 of Chelativorans sp. (strain BNC1).